We begin with the raw amino-acid sequence, 135 residues long: MNGSSAFHIILSVTFMVFLFGGLCEAGVVVNVDIINDIGPNVQLGLHCKSKDKDLGPQSLAPQQHWGFRKTLDFWGVTLFFCHFEWENQSKWFDILVAGRDRNTCAEHPCVWSIRPSGPCRLTGKEKCFPWNDQY.

Positions M1–A26 are cleaved as a signal peptide. N88 is a glycosylation site (N-linked (GlcNAc...) asparagine).

It belongs to the plant self-incompatibility (S1) protein family.

The protein resides in the secreted. The chain is S-protein homolog 20 from Arabidopsis thaliana (Mouse-ear cress).